An 879-amino-acid polypeptide reads, in one-letter code: Exocyst complex component 1 (879 aa).

The segment at 29–94 is disordered; it reads SQYSESEYDP…ATSLGNNDGD (66 aa). Residues 40-52 are compositionally biased toward basic and acidic residues; the sequence is ETTHSESDSENHH. Over residues 64 to 76 the composition is skewed to polar residues; that stretch reads FLSQSNDNVSNGP. Residues 77-91 are compositionally biased toward low complexity; that stretch reads SNNTLSSSATSLGNN. Coiled coils occupy residues 165–187 and 226–248; these read YNKQ…NKME and KGLK…KLKS. Disordered regions lie at residues 371-413 and 455-557; these read QNDF…GKDG and GQRN…PDAP. A compositionally biased stretch (low complexity) spans 373 to 409; the sequence is DFFSSSSSSKKSIDSLNNNTSTSTPSKNSSSSSSSSS. The segment covering 480–500 has biased composition (basic residues); that stretch reads KKSSKKDKKDKKDKKDKKDKK. Positions 519–532 are enriched in polar residues; that stretch reads DSNSPKSPNNAVNG. The span at 541–551 shows a compositional bias: pro residues; it reads SPPPPPPPPPK.

The protein belongs to the SEC3 family. In terms of assembly, the exocyst complex is composed of sec3/exoc1, sec5/exoc2, sec6/exoc3, sec8/exoc4, sec10/exoc5, sec15/exoc6, exo70/exoc7 and exo84/exoc8.

Its subcellular location is the midbody. It is found in the midbody ring. Functionally, component of the exocyst complex involved in the docking of exocytic vesicles with fusion sites on the plasma membrane. The chain is Exocyst complex component 1 (exoc1) from Dictyostelium discoideum (Social amoeba).